The primary structure comprises 323 residues: Ubiquinone biosynthesis protein COQ4, mitochondrial (323 aa).

Zn(2+) is bound by residues His-205, Asp-206, His-209, and Glu-221.

It belongs to the COQ4 family. As to quaternary structure, component of a multi-subunit COQ enzyme complex, composed of at least COQ3, COQ4, COQ5, COQ6, COQ7 and COQ9. Requires Zn(2+) as cofactor.

The protein resides in the mitochondrion inner membrane. The enzyme catalyses a 4-hydroxy-3-methoxy-5-(all-trans-polyprenyl)benzoate + H(+) = a 2-methoxy-6-(all-trans-polyprenyl)phenol + CO2. It participates in cofactor biosynthesis; ubiquinone biosynthesis. Lyase that catalyzes the C1-decarboxylation of 4-hydroxy-3-methoxy-5-(all-trans-polyprenyl)benzoic acid into 2-methoxy-6-(all-trans-polyprenyl)phenol during ubiquinone biosynthesis. The protein is Ubiquinone biosynthesis protein COQ4, mitochondrial of Candida albicans (strain SC5314 / ATCC MYA-2876) (Yeast).